Consider the following 417-residue polypeptide: Phosphoglycerate kinase 1 (417 aa).

Position 2 is an N-acetylserine (serine 2). Phosphoserine occurs at positions 2 and 4. Residue lysine 6 is modified to N6-succinyllysine. Position 11 is an N6-acetyllysine (lysine 11). (2R)-3-phosphoglycerate contacts are provided by valine 23, aspartate 24, phenylalanine 25, asparagine 26, glutamine 38, and arginine 39. A mitochondrial targeting region exposed following cis-trans isomerization by PIN1 and recognized by the TOM complex for mitochondrial translocation of the protein region spans residues 38–43; it reads QRIKAA. Lysine 48 bears the N6-acetyllysine; alternate mark. Lysine 48 carries the post-translational modification N6-succinyllysine; alternate. Serine 62, histidine 63, glycine 65, and arginine 66 together coordinate (2R)-3-phosphoglycerate. N6-acetyllysine is present on lysine 75. At tyrosine 76 the chain carries Phosphotyrosine. 2 positions are modified to N6-acetyllysine: lysine 86 and lysine 91. Lysine 97 is subject to N6-acetyllysine; alternate. Lysine 97 carries the N6-(2-hydroxyisobutyryl)lysine; alternate modification. Residues leucine 122 and arginine 123 each coordinate (2R)-3-phosphoglycerate. Position 131 is an N6-acetyllysine; alternate (lysine 131). Lysine 131 is modified (N6-malonyllysine; alternate). Residue lysine 146 is modified to N6-acetyllysine. (2R)-3-phosphoglycerate contacts are provided by histidine 170 and arginine 171. The residue at position 191 (lysine 191) is an N6-succinyllysine. Residue tyrosine 196 is modified to Phosphotyrosine. Lysine 199 is modified (N6-acetyllysine). A Phosphoserine modification is found at serine 203. Glycine 214 is a binding site for ADP. Glycine 214 lines the CDP pocket. Residues alanine 215 and lysine 216 each coordinate AMP. Alanine 215 serves as a coordination point for ATP. Alanine 215 is a binding site for Mg(2+). Lysine 216 carries the post-translational modification N6-(2-hydroxyisobutyryl)lysine. 2 residues coordinate Mg(2+): alanine 218 and aspartate 219. Residue aspartate 219 participates in CDP binding. Position 220 (lysine 220) interacts with AMP. Lysine 220 serves as a coordination point for ATP. An N6-(2-hydroxyisobutyryl)lysine modification is found at lysine 220. Glycine 238 is a binding site for ADP. Residue glycine 238 participates in CDP binding. Glycine 239 lines the AMP pocket. Residue glycine 239 participates in ATP binding. Residues lysine 267 and lysine 291 each carry the N6-acetyllysine modification. Glycine 313 contacts AMP. Glycine 313 contributes to the ATP binding site. Lysine 323 carries the N6-(2-hydroxyisobutyryl)lysine modification. Residues glycine 338, valine 340, and phenylalanine 343 each coordinate CDP. An ADP-binding site is contributed by phenylalanine 343. Glutamate 344 contributes to the AMP binding site. Glutamate 344 contributes to the ATP binding site. Lysine 361 bears the N6-acetyllysine mark. Residues aspartate 375 and threonine 376 each contribute to the ATP site. Aspartate 375 provides a ligand contact to Mg(2+).

The protein belongs to the phosphoglycerate kinase family. In terms of assembly, monomer. Interacts with kinase MAPK1/ERK2; the interaction is direct, occurs under hypoxic conditions, and promotes its interaction with PIN1. Interacts with peptidyl-prolyl cis-trans isomerase PIN1; the interaction is direct, occurs under hypoxic conditions, and targets the protein to the mitochondrion by promoting interactions with the TOM complex. Interacts with mitochondrial circRNA mcPGK1 (via its 2nd stem-loop); the interaction is direct and targets the protein to the mitochondrion by promoting interactions with the TOM complex. Interacts with pyruvate dehydrogenase kinase PDK1; the interaction is direct, occurs under hypoxic conditions and leads to PDK1-mediated inhibition of pyruvate dehydrogenase complex activity. The cofactor is Mg(2+). Phosphorylated at Ser-203 by MAPK1/ERK2 under hypoxic conditions, which promotes its mitochondrial targeting.

Its subcellular location is the cytoplasm. The protein resides in the cytosol. It is found in the mitochondrion matrix. It catalyses the reaction (2R)-3-phosphoglycerate + ATP = (2R)-3-phospho-glyceroyl phosphate + ADP. The enzyme catalyses L-seryl-[protein] + ATP = O-phospho-L-seryl-[protein] + ADP + H(+). It functions in the pathway carbohydrate degradation; glycolysis; pyruvate from D-glyceraldehyde 3-phosphate: step 2/5. Its function is as follows. Catalyzes one of the two ATP producing reactions in the glycolytic pathway via the reversible conversion of 1,3-diphosphoglycerate to 3-phosphoglycerate. Both L- and D- forms of purine and pyrimidine nucleotides can be used as substrates, but the activity is much lower on pyrimidines. In addition to its role as a glycolytic enzyme, it seems that PGK-1 acts as a polymerase alpha cofactor protein (primer recognition protein). Acts as a protein kinase when localized to the mitochondrion where it phosphorylates pyruvate dehydrogenase kinase PDK1 to inhibit pyruvate dehydrogenase complex activity and suppress the formation of acetyl-coenzyme A from pyruvate, and consequently inhibit oxidative phosphorylation and promote glycolysis. May play a role in sperm motility. This Cricetulus griseus (Chinese hamster) protein is Phosphoglycerate kinase 1 (PGK1).